We begin with the raw amino-acid sequence, 1048 residues long: Putative helicase/primase complex protein (1048 aa).

Residues 1025–1048 (STKEESSPTREETSSIKEKTFTET) are disordered.

This sequence belongs to the asfivirus F1055L family.

In terms of biological role, may be involved in DNA replication. This is Putative helicase/primase complex protein from African swine fever virus (isolate Pig/Kenya/KEN-50/1950) (ASFV).